The chain runs to 180 residues: MKIKKTAGRQPAPNRINEEITGVPEVRLTGIDGEAIGVVSIRDAQNLADEAGVDLVEISPNAEPPVCRIMDYGKFLFDKAKSAKEQKKKQKQVQVKEIKFRPGTDENDYQVKLRNLIRFLEDGDKAKITLRFRGREMAHQNLGMDLLNRIKADLDEYAVVESFPKMEGRQAIMVLAPKKK.

The protein belongs to the IF-3 family. As to quaternary structure, monomer.

It localises to the cytoplasm. In terms of biological role, IF-3 binds to the 30S ribosomal subunit and shifts the equilibrium between 70S ribosomes and their 50S and 30S subunits in favor of the free subunits, thus enhancing the availability of 30S subunits on which protein synthesis initiation begins. The chain is Translation initiation factor IF-3 from Shewanella baltica (strain OS223).